A 204-amino-acid polypeptide reads, in one-letter code: Phosphoribosyl-dephospho-CoA transferase (204 aa).

Catalysis depends on residues D129 and D131.

The protein belongs to the MdcG family.

The enzyme catalyses apo-[malonate decarboxylase ACP] + 2'-(5''-triphospho-alpha-D-ribosyl)-3'-dephospho-CoA = holo-[malonate decarboxylase ACP] + diphosphate. In terms of biological role, transfers 2'-(5-triphosphoribosyl)-3'-dephosphocoenzyme-A to the apo-[acyl-carrier-protein] of the malonate decarboxylase to yield holo-[acyl-carrier-protein]. The chain is Phosphoribosyl-dephospho-CoA transferase from Pseudomonas putida (strain GB-1).